A 170-amino-acid chain; its full sequence is Peptide deformylase (170 aa).

Residues Cys91 and His133 each coordinate Fe cation. Residue Glu134 is part of the active site. Residue His137 participates in Fe cation binding.

This sequence belongs to the polypeptide deformylase family. Fe(2+) serves as cofactor.

It catalyses the reaction N-terminal N-formyl-L-methionyl-[peptide] + H2O = N-terminal L-methionyl-[peptide] + formate. Functionally, removes the formyl group from the N-terminal Met of newly synthesized proteins. Requires at least a dipeptide for an efficient rate of reaction. N-terminal L-methionine is a prerequisite for activity but the enzyme has broad specificity at other positions. In Aliivibrio fischeri (strain ATCC 700601 / ES114) (Vibrio fischeri), this protein is Peptide deformylase.